The chain runs to 368 residues: Glycolate oxidase 2 (368 aa).

The FMN hydroxy acid dehydrogenase domain occupies 1 to 360 (MALVTNVCEY…TRGHVVTESD (360 aa)). FMN-binding positions include 78–80 (PTA), S107, 128–130 (QLS), and T156. R165 provides a ligand contact to glyoxylate. K231 and S253 together coordinate FMN. Glyoxylate contacts are provided by H255 and R258. Catalysis depends on H255, which acts as the Proton acceptor. FMN contacts are provided by residues 286–290 (DSGFR) and 309–310 (GR). Residues 366-368 (SRL) carry the Microbody targeting signal motif.

It belongs to the FMN-dependent alpha-hydroxy acid dehydrogenase family. In terms of assembly, homotetramer. FMN serves as cofactor.

The protein localises to the peroxisome. It catalyses the reaction glycolate + O2 = glyoxylate + H2O2. It functions in the pathway photosynthesis; photorespiration; glycine from 2-phosphoglycolate: step 2/3. Functionally, catalyzes the oxidation of glycolate to glyoxylate, with a reduction of O2 to H2O2. Is a key enzyme in photorespiration in green plants. This Oryza sativa subsp. indica (Rice) protein is Glycolate oxidase 2 (GLO2).